The sequence spans 225 residues: Orotate phosphoribosyltransferase (225 aa).

5-phospho-alpha-D-ribose 1-diphosphate is bound by residues Lys-26, 73-74, Arg-100, Lys-101, Lys-104, His-106, and 127-135; these read YK and EDVTTAGTS. Orotate contacts are provided by Thr-131 and Arg-160.

The protein belongs to the purine/pyrimidine phosphoribosyltransferase family. PyrE subfamily. Homodimer. Mg(2+) serves as cofactor.

It carries out the reaction orotidine 5'-phosphate + diphosphate = orotate + 5-phospho-alpha-D-ribose 1-diphosphate. Its pathway is pyrimidine metabolism; UMP biosynthesis via de novo pathway; UMP from orotate: step 1/2. Catalyzes the transfer of a ribosyl phosphate group from 5-phosphoribose 1-diphosphate to orotate, leading to the formation of orotidine monophosphate (OMP). The polypeptide is Orotate phosphoribosyltransferase (Lachnoclostridium phytofermentans (strain ATCC 700394 / DSM 18823 / ISDg) (Clostridium phytofermentans)).